A 245-amino-acid polypeptide reads, in one-letter code: MRQKLVIGNWKMHGSLAANAALLEGIKAGAAKATLAVCAPFPYLAQCQALLNGSQVAWGAQDVSAEARGAFTGEVSASMVGEFGCTYVLVGHSERRTYHGETDQTVAAKALRALEFGIVPVVCVGETLAQREAGETEAVVGRQLQAVLDALTVEQLSRVVLAYEPVWAIGTGKTATSEQAQAVHAFLRGQVAARDAGVAERMAILYGGSVKPDNAAELFSMTDIDGGLIGGASLKSADFLAIGNA.

9–11 (NWK) contacts substrate. The Electrophile role is filled by histidine 92. Glutamate 164 (proton acceptor) is an active-site residue. Substrate contacts are provided by residues glycine 170, serine 209, and 230-231 (GG).

This sequence belongs to the triosephosphate isomerase family. As to quaternary structure, homodimer.

The protein localises to the cytoplasm. The catalysed reaction is D-glyceraldehyde 3-phosphate = dihydroxyacetone phosphate. It participates in carbohydrate biosynthesis; gluconeogenesis. Its pathway is carbohydrate degradation; glycolysis; D-glyceraldehyde 3-phosphate from glycerone phosphate: step 1/1. In terms of biological role, involved in the gluconeogenesis. Catalyzes stereospecifically the conversion of dihydroxyacetone phosphate (DHAP) to D-glyceraldehyde-3-phosphate (G3P). This chain is Triosephosphate isomerase, found in Cupriavidus necator (strain ATCC 17699 / DSM 428 / KCTC 22496 / NCIMB 10442 / H16 / Stanier 337) (Ralstonia eutropha).